The following is an 86-amino-acid chain: uncharacterized protein (86 aa).

This sequence to C.jejuni CJ0253.

This is an uncharacterized protein from Helicobacter pylori (strain J99 / ATCC 700824) (Campylobacter pylori J99).